Here is a 220-residue protein sequence, read N- to C-terminus: UPF0758 protein ASA_4229 (220 aa).

Positions 95–220 (EQLQRGDALT…TVSFAERGWL (126 aa)) constitute an MPN domain. Residues H169, H171, and D182 each contribute to the Zn(2+) site. The short motif at 169 to 182 (HNHPSGVAEPSRAD) is the JAMM motif element.

This sequence belongs to the UPF0758 family.

The polypeptide is UPF0758 protein ASA_4229 (Aeromonas salmonicida (strain A449)).